The chain runs to 466 residues: Asparagine--tRNA ligase (466 aa).

Belongs to the class-II aminoacyl-tRNA synthetase family. In terms of assembly, homodimer.

Its subcellular location is the cytoplasm. The enzyme catalyses tRNA(Asn) + L-asparagine + ATP = L-asparaginyl-tRNA(Asn) + AMP + diphosphate + H(+). This is Asparagine--tRNA ligase from Klebsiella pneumoniae subsp. pneumoniae (strain ATCC 700721 / MGH 78578).